A 274-amino-acid chain; its full sequence is MQNITQSWFVQGMIKATTDAWLKGWDERNGGNLTLRLDDADIALYHDNFHPQPRYIPLSQPMHLLANTPFIVTGSGKFFRNVQLDPAANLGVVKVDSDGAGYHILWGLTNEAVPTSELPAHFLSHCERIKATNGKDRVIMHCHATNLIALTYVLENDTAVFTRQLWEGSTECLVVFPDGVGILPWMVPGTDEIGQATAQEMQKHSLVLWPFHGVFGSGPTLDETFGLIDTAEKSAQVLVKIYSMGGMKQTISREELIALGKRFGVTPLASALAL.

The active site involves Glu117. The Zn(2+) site is built by His141, His143, and His212.

Belongs to the aldolase class II family. RhaD subfamily. Homotetramer. It depends on Zn(2+) as a cofactor.

It is found in the cytoplasm. It carries out the reaction L-rhamnulose 1-phosphate = (S)-lactaldehyde + dihydroxyacetone phosphate. The protein operates within carbohydrate degradation; L-rhamnose degradation; glycerone phosphate from L-rhamnose: step 3/3. In terms of biological role, catalyzes the reversible cleavage of L-rhamnulose-1-phosphate to dihydroxyacetone phosphate (DHAP) and L-lactaldehyde. The protein is Rhamnulose-1-phosphate aldolase of Shigella dysenteriae serotype 1 (strain Sd197).